The primary structure comprises 293 residues: Ribosomal protein L11 methyltransferase (293 aa).

The S-adenosyl-L-methionine site is built by threonine 145, glycine 166, aspartate 188, and asparagine 230.

The protein belongs to the methyltransferase superfamily. PrmA family.

Its subcellular location is the cytoplasm. It catalyses the reaction L-lysyl-[protein] + 3 S-adenosyl-L-methionine = N(6),N(6),N(6)-trimethyl-L-lysyl-[protein] + 3 S-adenosyl-L-homocysteine + 3 H(+). Methylates ribosomal protein L11. The polypeptide is Ribosomal protein L11 methyltransferase (Shewanella woodyi (strain ATCC 51908 / MS32)).